Here is a 105-residue protein sequence, read N- to C-terminus: UPF0235 protein RP839 (105 aa).

The protein belongs to the UPF0235 family.

This Rickettsia prowazekii (strain Madrid E) protein is UPF0235 protein RP839.